A 171-amino-acid polypeptide reads, in one-letter code: MEKLPRKRVSKTKSQKLINSLTTQKNRALLKKISSNEMLLELEKGAFKKNEAYFISDEEDKNYVLVPDNVISLLAENARKAFEARLKAELERDIIIQAPIDFEDVREVSLQLLENLRQKDGNLPNINTLNFVKQIKKEHPNLFFNFDNMFKQPPFNENNFENFDSNDEENF.

Belongs to the UPF0763 family.

The sequence is that of UPF0763 protein Hac_0849 from Helicobacter acinonychis (strain Sheeba).